An 871-amino-acid polypeptide reads, in one-letter code: Metabotropic glutamate receptor 6 (871 aa).

The N-terminal stretch at 1-23 is a signal peptide; the sequence is MGRLPVLLLWLAWWLSQAGIACG. Residues 24–579 lie on the Extracellular side of the membrane; the sequence is AGSVRLAGGL…VVRLTWSSPW (556 aa). A disulfide bridge links Cys-51 with Cys-93. L-glutamate-binding positions include Ser-148, 169 to 171, and Tyr-219; that span reads AST. Cystine bridges form between Cys-238-Cys-530, Cys-361-Cys-377, Cys-417-Cys-424, Cys-512-Cys-531, Cys-516-Cys-534, Cys-537-Cys-549, and Cys-552-Cys-565. N-linked (GlcNAc...) asparagine glycosylation occurs at Asn-290. An L-glutamate-binding site is contributed by Asp-301. Lys-394 serves as a coordination point for L-glutamate. 2 N-linked (GlcNAc...) asparagine glycosylation sites follow: Asn-445 and Asn-473. Asn-561 carries N-linked (GlcNAc...) asparagine glycosylation. The helical transmembrane segment at 580 to 602 threads the bilayer; that stretch reads AALPLLLAVLGIMATTTIMATFM. At 603–616 the chain is on the cytoplasmic side; the sequence is RHNDTPIVRASGRE. A helical membrane pass occupies residues 617–637; it reads LSYVLLTGIFLIYAITFLMVA. Topologically, residues 638–648 are extracellular; the sequence is EPCAAICAARR. The chain crosses the membrane as a helical span at residues 649 to 667; sequence LLLGLGTTLSYSALLTKTN. The Cytoplasmic portion of the chain corresponds to 668–691; it reads RIYRIFEQGKRSVTPPPFISPTSQ. The helical transmembrane segment at 692–712 threads the bilayer; it reads LVITFGLTSLQVVGVIAWLGA. The Extracellular portion of the chain corresponds to 713–742; the sequence is QPPHSVIDYEEQRTVDPEQARGVLKCDMSD. A helical membrane pass occupies residues 743 to 764; that stretch reads LSLIGCLGYSLLLMVTCTVYAI. Residues 765–777 lie on the Cytoplasmic side of the membrane; it reads KARGVPETFNEAK. The helical transmembrane segment at 778–800 threads the bilayer; it reads PIGFTMYTTCIIWLAFVPIFFGT. At 801 to 813 the chain is on the extracellular side; sequence AQSAEKIYIQTTT. A helical membrane pass occupies residues 814–839; sequence LTVSLSLSASVSLGMLYVPKTYVILF. At 840 to 871 the chain is on the cytoplasmic side; it reads HPEQNVQKRKRSLKKTSTMAAPPQNENAEDAK. The tract at residues 850–871 is disordered; sequence RSLKKTSTMAAPPQNENAEDAK.

Belongs to the G-protein coupled receptor 3 family. Homodimer. Interacts with GPR179. Interacts with photoreceptor synaptic protein LRIT1 (via its N-terminal extracellular domain). Restricted expression in the inner nuclear layer of the retina.

The protein resides in the cell membrane. It localises to the endoplasmic reticulum membrane. Its subcellular location is the golgi apparatus membrane. It is found in the cell projection. The protein localises to the dendrite. Its function is as follows. G-protein coupled receptor for glutamate. Ligand binding causes a conformation change that triggers signaling via guanine nucleotide-binding proteins (G proteins) and modulates the activity of down-stream effectors, such as adenylate cyclase. Signaling inhibits adenylate cyclase activity. Signaling stimulates TRPM1 channel activity and Ca(2+) uptake. Required for normal vision. The sequence is that of Metabotropic glutamate receptor 6 (Grm6) from Rattus norvegicus (Rat).